Here is an 878-residue protein sequence, read N- to C-terminus: Lon protease 2 (878 aa).

Positions leucine 85 to isoleucine 281 constitute a Lon N-terminal domain. Glycine 434 to threonine 441 lines the ATP pocket. Residues asparagine 668–isoleucine 850 form the Lon proteolytic domain. Active-site residues include serine 756 and lysine 799.

Belongs to the peptidase S16 family. As to quaternary structure, homohexamer. Organized in a ring with a central cavity.

Its subcellular location is the cytoplasm. It catalyses the reaction Hydrolysis of proteins in presence of ATP.. In terms of biological role, ATP-dependent serine protease that mediates the selective degradation of mutant and abnormal proteins as well as certain short-lived regulatory proteins. Required for cellular homeostasis and for survival from DNA damage and developmental changes induced by stress. Degrades polypeptides processively to yield small peptide fragments that are 5 to 10 amino acids long. Binds to DNA in a double-stranded, site-specific manner. The sequence is that of Lon protease 2 from Hydrogenovibrio crunogenus (strain DSM 25203 / XCL-2) (Thiomicrospira crunogena).